Reading from the N-terminus, the 513-residue chain is ATP synthase subunit alpha (513 aa).

Gly-169–Thr-176 contacts ATP.

This sequence belongs to the ATPase alpha/beta chains family. As to quaternary structure, F-type ATPases have 2 components, CF(1) - the catalytic core - and CF(0) - the membrane proton channel. CF(1) has five subunits: alpha(3), beta(3), gamma(1), delta(1), epsilon(1). CF(0) has three main subunits: a(1), b(2) and c(9-12). The alpha and beta chains form an alternating ring which encloses part of the gamma chain. CF(1) is attached to CF(0) by a central stalk formed by the gamma and epsilon chains, while a peripheral stalk is formed by the delta and b chains.

Its subcellular location is the cell inner membrane. The enzyme catalyses ATP + H2O + 4 H(+)(in) = ADP + phosphate + 5 H(+)(out). Functionally, produces ATP from ADP in the presence of a proton gradient across the membrane. The alpha chain is a regulatory subunit. The protein is ATP synthase subunit alpha of Shewanella sediminis (strain HAW-EB3).